We begin with the raw amino-acid sequence, 123 residues long: Ribosome-binding factor A (123 aa).

Belongs to the RbfA family. As to quaternary structure, monomer. Binds 30S ribosomal subunits, but not 50S ribosomal subunits or 70S ribosomes.

Its subcellular location is the cytoplasm. Functionally, one of several proteins that assist in the late maturation steps of the functional core of the 30S ribosomal subunit. Associates with free 30S ribosomal subunits (but not with 30S subunits that are part of 70S ribosomes or polysomes). Required for efficient processing of 16S rRNA. May interact with the 5'-terminal helix region of 16S rRNA. In Cupriavidus taiwanensis (strain DSM 17343 / BCRC 17206 / CCUG 44338 / CIP 107171 / LMG 19424 / R1) (Ralstonia taiwanensis (strain LMG 19424)), this protein is Ribosome-binding factor A.